A 37-amino-acid polypeptide reads, in one-letter code: Large ribosomal subunit protein bL36B (37 aa).

Belongs to the bacterial ribosomal protein bL36 family.

The chain is Large ribosomal subunit protein bL36B from Paenarthrobacter aurescens (strain TC1).